A 782-amino-acid chain; its full sequence is Transcription factor SOX-30 (782 aa).

3 disordered regions span residues 1 to 37, 95 to 117, and 139 to 226; these read MERA…AQPV, LPPG…AAAA, and PPQS…DALK. Pro residues-rich tracts occupy residues 7 to 35 and 97 to 106; these read EPPP…PPAQ and PGGPGVPPAP. Positions 203 to 226 are enriched in basic and acidic residues; sequence LDGRRSDEKKAKLEAEEAPRDALK. Residues 366–434 constitute a DNA-binding region (HMG box); the sequence is VKRPMNAFMV…KHREEFPGWV (69 aa). Disordered stretches follow at residues 501 to 604, 704 to 724, and 756 to 782; these read PTPA…STCP, YPDE…DGPP, and ASAP…LRNL. A compositionally biased stretch (polar residues) spans 512–522; the sequence is TLFQPSVSSTG. Over residues 525–538 the composition is skewed to pro residues; sequence AVPPPSLTPRPSLP. Residues 555–574 show a composition bias toward polar residues; sequence SGSSRSVKRSTPGSLESTTR. Residues 704-718 show a composition bias toward basic and acidic residues; that stretch reads YPDEHTHSEDSRSCE.

In terms of assembly, interacts with CTNNB1, competitively inhibiting CTNNB1-TCF7L2/TCF4 interaction. In terms of tissue distribution, expressed in the lung (at protein level). Expressed in testes (at protein level). Expressed in preleptotene spermatocytes, round spermatids, and elongated spermatids in the testis (at protein level). Expressed in pachytene spermatocytes during stages 3 to 8 of spermatogenesis (at protein level). Increased expression in diplotene spermatocytes at stage 9-11 and in metaphase spermatocytes or secondary spermatocytes at stage 12. Expressed in ovaries.

The protein localises to the nucleus. Its subcellular location is the cytoplasm. Acts both as a transcriptional activator and a repressor. Binds to the DNA sequence 5'-ACAAT-3' and shows a preference for guanine residues surrounding this core motif. Binds to its own promoter and activates its own transcription. Required to activate the expression of postmeiotic genes involved in spermiogenesis. Binds to the promoter region of CTNNB1 and represses its transcription which leads to inhibition of Wnt signaling. Also inhibits Wnt signaling by binding to the CTNNB1 protein, preventing interaction of CTNNB1 with TCF7L2/TCF4. The polypeptide is Transcription factor SOX-30 (Sox30) (Mus musculus (Mouse)).